The chain runs to 602 residues: uncharacterized protein (602 aa).

Positions 51-210 constitute a Helicase ATP-binding domain; it reads QYLGTQPRDF…PFVSYQPDAD (160 aa). The segment covering 430 to 439 has biased composition (basic and acidic residues); the sequence is PHRESAHDPL. 2 disordered regions span residues 430 to 452 and 518 to 538; these read PHRE…TERG and RAQL…ASVH. The segment covering 523-534 has biased composition (polar residues); that stretch reads KGATQPATSGAS.

This sequence to M.leprae ML1624.

This is an uncharacterized protein from Mycobacterium tuberculosis (strain CDC 1551 / Oshkosh).